The sequence spans 751 residues: Lanosterol synthase erg7A (751 aa).

The disordered stretch occupies residues 1–22 (MTGGPIASWRTAAQGHLTPDEN). Residues 147 to 189 (ATEIKRYLFARQHPEDGGWGLHIEAHSSVFGTCMNYVALRLIG) form a PFTB 1 repeat. The active-site Proton donor is D481. PFTB repeat units lie at residues 508–553 (LKDS…MIGY), 585–625 (KDKA…ASVG), and 634–675 (ARRG…VQTA).

It belongs to the terpene cyclase/mutase family.

Its subcellular location is the lipid droplet. It localises to the endoplasmic reticulum membrane. The enzyme catalyses (S)-2,3-epoxysqualene = lanosterol. The protein operates within steroid metabolism; ergosterol biosynthesis. Functionally, lanosterol synthase; part of the third module of ergosterol biosynthesis pathway that includes the late steps of the pathway. ERG7A and ERG7B catalyze the cyclization of (S)-2,3 oxidosqualene to lanosterol, a reaction that forms the sterol core. The third module or late pathway involves the ergosterol synthesis itself through consecutive reactions that mainly occur in the endoplasmic reticulum (ER) membrane. Firstly, the squalene synthase erg9 catalyzes the condensation of 2 farnesyl pyrophosphate moieties to form squalene, which is the precursor of all steroids. Squalene synthase is crucial for balancing the incorporation of farnesyl diphosphate (FPP) into sterol and nonsterol isoprene synthesis. Secondly, squalene is converted into lanosterol by the consecutive action of the squalene epoxidase erg1 and the lanosterol synthase erg7. Then, the delta(24)-sterol C-methyltransferase erg6 methylates lanosterol at C-24 to produce eburicol. Eburicol is the substrate of the sterol 14-alpha demethylase encoded by cyp51A and cyp51B, to yield 4,4,24-trimethyl ergosta-8,14,24(28)-trienol. The C-14 reductase erg24 then reduces the C14=C15 double bond which leads to 4,4-dimethylfecosterol. A sequence of further demethylations at C-4, involving the C-4 demethylation complex containing the C-4 methylsterol oxidases erg25A or erg25B, the sterol-4-alpha-carboxylate 3-dehydrogenase erg26 and the 3-keto-steroid reductase erg27, leads to the production of fecosterol via 4-methylfecosterol. The C-8 sterol isomerase erg2 then catalyzes the reaction which results in unsaturation at C-7 in the B ring of sterols and thus converts fecosterol to episterol. The sterol-C5-desaturase erg3B then catalyzes the introduction of a C-5 double bond in the B ring to produce 5-dehydroepisterol. The 2 other sterol-C5-desaturases, erg3A and erg3C, seem to be less important in ergosterol biosynthesis. The C-22 sterol desaturase erg5 further converts 5-dehydroepisterol into ergosta-5,7,22,24(28)-tetraen-3beta-ol by forming the C-22(23) double bond in the sterol side chain. Finally, ergosta-5,7,22,24(28)-tetraen-3beta-ol is substrate of the C-24(28) sterol reductases erg4A and erg4B to produce ergosterol. Possible alternative sterol biosynthetic pathways might exist from fecosterol to ergosterol, depending on the activities of the erg3 isoforms. This is Lanosterol synthase erg7A from Aspergillus fumigatus (strain ATCC MYA-4609 / CBS 101355 / FGSC A1100 / Af293) (Neosartorya fumigata).